The following is a 540-amino-acid chain: Bifunctional purine biosynthesis protein PurH (540 aa).

Residues M1–V144 enclose the MGS-like domain. The tract at residues E204 to S224 is disordered.

It belongs to the PurH family.

It catalyses the reaction (6R)-10-formyltetrahydrofolate + 5-amino-1-(5-phospho-beta-D-ribosyl)imidazole-4-carboxamide = 5-formamido-1-(5-phospho-D-ribosyl)imidazole-4-carboxamide + (6S)-5,6,7,8-tetrahydrofolate. The enzyme catalyses IMP + H2O = 5-formamido-1-(5-phospho-D-ribosyl)imidazole-4-carboxamide. It functions in the pathway purine metabolism; IMP biosynthesis via de novo pathway; 5-formamido-1-(5-phospho-D-ribosyl)imidazole-4-carboxamide from 5-amino-1-(5-phospho-D-ribosyl)imidazole-4-carboxamide (10-formyl THF route): step 1/1. Its pathway is purine metabolism; IMP biosynthesis via de novo pathway; IMP from 5-formamido-1-(5-phospho-D-ribosyl)imidazole-4-carboxamide: step 1/1. In Symbiobacterium thermophilum (strain DSM 24528 / JCM 14929 / IAM 14863 / T), this protein is Bifunctional purine biosynthesis protein PurH.